The sequence spans 629 residues: tRNA uridine 5-carboxymethylaminomethyl modification enzyme MnmG (629 aa).

13–18 provides a ligand contact to FAD; the sequence is GGGHAG. 273–287 serves as a coordination point for NAD(+); the sequence is GPRYCPSIEDKIMRF.

It belongs to the MnmG family. In terms of assembly, homodimer. Heterotetramer of two MnmE and two MnmG subunits. FAD is required as a cofactor.

It is found in the cytoplasm. Functionally, NAD-binding protein involved in the addition of a carboxymethylaminomethyl (cmnm) group at the wobble position (U34) of certain tRNAs, forming tRNA-cmnm(5)s(2)U34. The chain is tRNA uridine 5-carboxymethylaminomethyl modification enzyme MnmG from Tolumonas auensis (strain DSM 9187 / NBRC 110442 / TA 4).